A 341-amino-acid chain; its full sequence is Aspartate carbamoyltransferase catalytic subunit (341 aa).

R89 and T90 together coordinate carbamoyl phosphate. Residue K117 coordinates L-aspartate. 3 residues coordinate carbamoyl phosphate: R139, H169, and Q172. L-aspartate-binding residues include R202 and R257. Carbamoyl phosphate is bound by residues G298 and P299.

This sequence belongs to the aspartate/ornithine carbamoyltransferase superfamily. ATCase family. Heterododecamer (2C3:3R2) of six catalytic PyrB chains organized as two trimers (C3), and six regulatory PyrI chains organized as three dimers (R2).

The enzyme catalyses carbamoyl phosphate + L-aspartate = N-carbamoyl-L-aspartate + phosphate + H(+). The protein operates within pyrimidine metabolism; UMP biosynthesis via de novo pathway; (S)-dihydroorotate from bicarbonate: step 2/3. Its function is as follows. Catalyzes the condensation of carbamoyl phosphate and aspartate to form carbamoyl aspartate and inorganic phosphate, the committed step in the de novo pyrimidine nucleotide biosynthesis pathway. The sequence is that of Aspartate carbamoyltransferase catalytic subunit from Paraburkholderia phytofirmans (strain DSM 17436 / LMG 22146 / PsJN) (Burkholderia phytofirmans).